Here is a 536-residue protein sequence, read N- to C-terminus: Membrane protein insertase YidC (536 aa).

The chain crosses the membrane as a helical span at residues 5–25 (ALIAVILSIVFFYGYSALFPP). The tract at residues 30-54 (APAPSAQQAVTGSQPGAPQASVAAV) is disordered. Positions 31–54 (PAPSAQQAVTGSQPGAPQASVAAV) are enriched in low complexity. The next 4 membrane-spanning stretches (helical) occupy residues 350-370 (YGIA…PLTH), 420-440 (LPML…MFSI), 454-474 (LAGK…MVIQ), and 494-514 (PVVF…YWLV).

This sequence belongs to the OXA1/ALB3/YidC family. Type 1 subfamily. In terms of assembly, interacts with the Sec translocase complex via SecD. Specifically interacts with transmembrane segments of nascent integral membrane proteins during membrane integration.

The protein localises to the cell inner membrane. Required for the insertion and/or proper folding and/or complex formation of integral membrane proteins into the membrane. Involved in integration of membrane proteins that insert both dependently and independently of the Sec translocase complex, as well as at least some lipoproteins. Aids folding of multispanning membrane proteins. This chain is Membrane protein insertase YidC, found in Geobacter metallireducens (strain ATCC 53774 / DSM 7210 / GS-15).